Reading from the N-terminus, the 443-residue chain is Signal recognition particle 54 kDa protein (443 aa).

GTP contacts are provided by residues 107-114 (GIQGSGKT), 189-193 (DTAGR), and 247-250 (TKLD).

This sequence belongs to the GTP-binding SRP family. SRP54 subfamily. In terms of assembly, part of the signal recognition particle protein translocation system, which is composed of SRP and FtsY. Archaeal SRP consists of a 7S RNA molecule of 300 nucleotides and two protein subunits: SRP54 and SRP19.

The protein resides in the cytoplasm. It catalyses the reaction GTP + H2O = GDP + phosphate + H(+). In terms of biological role, involved in targeting and insertion of nascent membrane proteins into the cytoplasmic membrane. Binds to the hydrophobic signal sequence of the ribosome-nascent chain (RNC) as it emerges from the ribosomes. The SRP-RNC complex is then targeted to the cytoplasmic membrane where it interacts with the SRP receptor FtsY. The chain is Signal recognition particle 54 kDa protein from Pyrococcus furiosus (strain ATCC 43587 / DSM 3638 / JCM 8422 / Vc1).